Reading from the N-terminus, the 360-residue chain is DnaJ homolog subfamily C member 25 (360 aa).

The helical transmembrane segment at 20-40 (WMLLAPLLPALLLVRPAGALV) threads the bilayer. The 76-residue stretch at 49–124 (DCYEVLGVSR…ETRKDYDYML (76 aa)) folds into the J domain. 2 consecutive transmembrane segments (helical) span residues 150–170 (VVILVSVCAISVFQFFSWWNS) and 244–264 (LLLFQIILAPFHLCSYIVWYC).

Belongs to the DNAJC25 family.

The protein localises to the membrane. The sequence is that of DnaJ homolog subfamily C member 25 (DNAJC25) from Homo sapiens (Human).